Reading from the N-terminus, the 148-residue chain is UPAR/Ly6 domain-containing protein bero (148 aa).

An N-terminal signal peptide occupies residues 1–23 (MVSALKCSLAVAVMISLACSAYA). Intrachain disulfides connect Cys-26–Cys-72, Cys-29–Cys-37, Cys-51–Cys-90, Cys-102–Cys-116, and Cys-119–Cys-124. N-linked (GlcNAc...) asparagine glycosylation occurs at Asn-68. N-linked (GlcNAc...) asparagine glycosylation is present at Asn-125. Asn-125 is lipidated: GPI-anchor amidated asparagine. Positions 126 to 148 (GSSSLAPIAGAILLFFGVARLLA) are cleaved as a propeptide — removed in mature form. A helical membrane pass occupies residues 128–148 (SSLAPIAGAILLFFGVARLLA).

Belongs to the quiver family.

The protein resides in the cell membrane. It is found in the membrane. It localises to the perikaryon. Its subcellular location is the cell projection. The protein localises to the neuron projection. Necessary for the maintenance of persistent fluctuating activities and suppression of acute evoked activities in abdominal leucokinin-producing (ABLK) neurons to negatively regulate neuron excitability involved in nociceptive (perception of pain) behavioral responses. The sequence is that of UPAR/Ly6 domain-containing protein bero from Drosophila melanogaster (Fruit fly).